The primary structure comprises 374 residues: N5-carboxyaminoimidazole ribonucleotide synthase (374 aa).

Residues Arg-108, Lys-148, 153–159 (GYDGKGQ), 183–186 (EQFL), Glu-191, His-214, and 266–267 (NE) contribute to the ATP site. The 185-residue stretch at 112–296 (KQTLQKAGSK…QFDTHILAVT (185 aa)) folds into the ATP-grasp domain.

The protein belongs to the PurK/PurT family. In terms of assembly, homodimer.

It carries out the reaction 5-amino-1-(5-phospho-beta-D-ribosyl)imidazole + hydrogencarbonate + ATP = 5-carboxyamino-1-(5-phospho-D-ribosyl)imidazole + ADP + phosphate + 2 H(+). The protein operates within purine metabolism; IMP biosynthesis via de novo pathway; 5-amino-1-(5-phospho-D-ribosyl)imidazole-4-carboxylate from 5-amino-1-(5-phospho-D-ribosyl)imidazole (N5-CAIR route): step 1/2. Its function is as follows. Catalyzes the ATP-dependent conversion of 5-aminoimidazole ribonucleotide (AIR) and HCO(3)(-) to N5-carboxyaminoimidazole ribonucleotide (N5-CAIR). The sequence is that of N5-carboxyaminoimidazole ribonucleotide synthase from Staphylococcus haemolyticus (strain JCSC1435).